A 57-amino-acid chain; its full sequence is Large ribosomal subunit protein eL20 (57 aa).

The protein belongs to the eukaryotic ribosomal protein eL20 family. In terms of assembly, part of the 50S ribosomal subunit. Binds 23S rRNA.

The polypeptide is Large ribosomal subunit protein eL20 (Natronomonas pharaonis (strain ATCC 35678 / DSM 2160 / CIP 103997 / JCM 8858 / NBRC 14720 / NCIMB 2260 / Gabara) (Halobacterium pharaonis)).